The chain runs to 273 residues: Large ribosomal subunit protein uL2 (273 aa).

Disordered stretches follow at residues 28–53 (KPFA…TTRH) and 221–273 (RGTA…RRSK). The segment covering 39 to 48 (KSGGRNNNGR) has biased composition (low complexity). Lys242 carries the N6-acetyllysine modification.

The protein belongs to the universal ribosomal protein uL2 family. In terms of assembly, part of the 50S ribosomal subunit. Forms a bridge to the 30S subunit in the 70S ribosome.

In terms of biological role, one of the primary rRNA binding proteins. Required for association of the 30S and 50S subunits to form the 70S ribosome, for tRNA binding and peptide bond formation. It has been suggested to have peptidyltransferase activity; this is somewhat controversial. Makes several contacts with the 16S rRNA in the 70S ribosome. The polypeptide is Large ribosomal subunit protein uL2 (Shigella dysenteriae serotype 1 (strain Sd197)).